Reading from the N-terminus, the 119-residue chain is Type II secretion system protein I (119 aa).

Residues 1–5 (MNARG) constitute a propeptide, leader sequence. M6 is subject to N-methylmethionine. Residues 6–26 (MTLLEVMVALAVFAIAGLAVM) form a helical membrane-spanning segment.

This sequence belongs to the GSP I family. In terms of assembly, type II secretion is composed of four main components: the outer membrane complex, the inner membrane complex, the cytoplasmic secretion ATPase and the periplasm-spanning pseudopilus. Interacts with core component ExeG. In terms of processing, cleaved by prepilin peptidase. Post-translationally, methylated by prepilin peptidase at the amino group of the N-terminal methionine once the leader sequence is cleaved by prepilin peptidase.

It is found in the cell inner membrane. Functionally, component of the type II secretion system required for the energy-dependent secretion of extracellular factors such as proteases and toxins from the periplasm. Part of the pseudopilus tip complex that is critical for the recognition and binding of secretion substrates. This is Type II secretion system protein I (exeI) from Aeromonas hydrophila.